The primary structure comprises 1270 residues: Nuclear exosome regulator NRDE2 (1270 aa).

Disordered stretches follow at residues 1–22 (MFRA…ENPD) and 119–209 (SVKS…HTLM). Polar residues predominate over residues 119–135 (SVKSLNGCQDPPETSQQ). Residues 164–184 (QRSRSREKKRRKKERRRKRSS) show a composition bias toward basic residues. A compositionally biased stretch (basic and acidic residues) spans 192 to 204 (RSRDRSSRARDTS).

This sequence belongs to the NRDE2 family. In terms of assembly, interacts with nrde-3.

It localises to the nucleus. The protein localises to the nucleus speckle. Its subcellular location is the nucleolus. In terms of biological role, protein of the nuclear speckles that regulates RNA exosomal degradation. Involved in short interfering RNAs-mediated silencing in nuclei. Functions with nrde-3 in the nuclear RNA-mediated gene silencing (RNAi) pathway to regulate gene expression via inhibition of RNA polymerases I and II during the elongation phase of transcription. Required for exogenous RNAi-induced H3K27 methylation. The chain is Nuclear exosome regulator NRDE2 (nrde-2) from Caenorhabditis elegans.